We begin with the raw amino-acid sequence, 307 residues long: Oxygen-dependent coproporphyrinogen-III oxidase (307 aa).

S99 is a substrate binding site. Residues H103 and H113 each coordinate a divalent metal cation. H113 functions as the Proton donor in the catalytic mechanism. 115–117 (NVR) is a substrate binding site. A divalent metal cation is bound by residues H152 and H182. The interval 247–282 (YVEFNLVFDRGTLFGLQSGGRTESILMSMPPVVNWR) is important for dimerization. Residue 265 to 267 (GGR) participates in substrate binding.

The protein belongs to the aerobic coproporphyrinogen-III oxidase family. In terms of assembly, homodimer. The cofactor is a divalent metal cation.

The protein localises to the cytoplasm. It carries out the reaction coproporphyrinogen III + O2 + 2 H(+) = protoporphyrinogen IX + 2 CO2 + 2 H2O. The protein operates within porphyrin-containing compound metabolism; protoporphyrin-IX biosynthesis; protoporphyrinogen-IX from coproporphyrinogen-III (O2 route): step 1/1. In terms of biological role, involved in the heme biosynthesis. Catalyzes the aerobic oxidative decarboxylation of propionate groups of rings A and B of coproporphyrinogen-III to yield the vinyl groups in protoporphyrinogen-IX. The polypeptide is Oxygen-dependent coproporphyrinogen-III oxidase (Paraburkholderia phytofirmans (strain DSM 17436 / LMG 22146 / PsJN) (Burkholderia phytofirmans)).